Reading from the N-terminus, the 333-residue chain is Biotin synthase (333 aa).

The region spanning 40-269 (YRVQLASLLS…HARVRLSAGR (230 aa)) is the Radical SAM core domain. [4Fe-4S] cluster contacts are provided by Cys-55, Cys-59, and Cys-62. Residues Cys-100, Cys-132, Cys-192, and Arg-264 each contribute to the [2Fe-2S] cluster site.

Belongs to the radical SAM superfamily. Biotin synthase family. Homodimer. [4Fe-4S] cluster is required as a cofactor. The cofactor is [2Fe-2S] cluster.

It catalyses the reaction (4R,5S)-dethiobiotin + (sulfur carrier)-SH + 2 reduced [2Fe-2S]-[ferredoxin] + 2 S-adenosyl-L-methionine = (sulfur carrier)-H + biotin + 2 5'-deoxyadenosine + 2 L-methionine + 2 oxidized [2Fe-2S]-[ferredoxin]. Its pathway is cofactor biosynthesis; biotin biosynthesis; biotin from 7,8-diaminononanoate: step 2/2. Its function is as follows. Catalyzes the conversion of dethiobiotin (DTB) to biotin by the insertion of a sulfur atom into dethiobiotin via a radical-based mechanism. The protein is Biotin synthase of Synechococcus sp. (strain CC9902).